Reading from the N-terminus, the 253-residue chain is Uridine phosphorylase (253 aa).

This sequence belongs to the PNP/UDP phosphorylase family. As to quaternary structure, homohexamer.

Its subcellular location is the cytoplasm. It catalyses the reaction uridine + phosphate = alpha-D-ribose 1-phosphate + uracil. It functions in the pathway pyrimidine metabolism; UMP biosynthesis via salvage pathway; uracil from uridine (phosphorylase route): step 1/1. In terms of biological role, catalyzes the reversible phosphorylytic cleavage of uridine to uracil and ribose-1-phosphate. In Klebsiella aerogenes (Enterobacter aerogenes), this protein is Uridine phosphorylase (udp).